The sequence spans 335 residues: Aspartate--ammonia ligase (335 aa).

Belongs to the class-II aminoacyl-tRNA synthetase family. AsnA subfamily.

It is found in the cytoplasm. It catalyses the reaction L-aspartate + NH4(+) + ATP = L-asparagine + AMP + diphosphate + H(+). It functions in the pathway amino-acid biosynthesis; L-asparagine biosynthesis; L-asparagine from L-aspartate (ammonia route): step 1/1. This Levilactobacillus brevis (strain ATCC 367 / BCRC 12310 / CIP 105137 / JCM 1170 / LMG 11437 / NCIMB 947 / NCTC 947) (Lactobacillus brevis) protein is Aspartate--ammonia ligase.